An 829-amino-acid polypeptide reads, in one-letter code: MTTFVTQDTINAFFDGRHADPFAVLGMHETDNGIEIRALLPDAGRVVVIDKETQDEVCELSRIDERGFFAGIMPQRNSFFNYQLQVSWGNEVLRIEDPYRFHPMIQELDNWLLAEGSHLRPYEVLGAHFMECDHVSGVNFRLWAPNAKRVSVVGDFNYWDGRRHPMRFHQASGVWELFIPKVALGDLYKFELLDNNNRLRLKSDPYAFAAQLRPDTASQISVLPEIQEMTAARRKANQLDQPISIYEVHLGSWRRNLANNFWLNYDEIADELIPYVKEMGFTHIELLPISEFPFDGSWGYQPIGLYAPTSRFGSPEGFKRFVDKAHAAGINVILDWVPGHFPSDTHGLATFDGTALYEHADPKEGYHQDWNTLIYNYGRHEVKNYLSGNALYWVERFGLDGIRVDAVASMIYRDYSRRDGEWIPNQYGGRENLEAIEFLKHTNYILGTEHPGVMCVAEESTAFAGVTLPPENGGLGFNFKWNMGWMNDTLSYMKLDPIYRQYNHSKLTFGMLYQYSENFVLPLSHDEVVHGKCSLLDKMPGDTWQKFANLRAYYGYMWAYPGKKLLFMGNEFAQGREWNYQESLDWYLLDEFHGGGWHSGVQRLVKDLNKTYQKQSALYQLDTKPEGFEWLVVDDAQNSVFVFERRNAKGEPLIVVSNFTPVPRENYRFGVNVAGSYEEILNTDADIYKGSGLNNGGVIDSEEIESHGKTQSISITVPPLATVYFKLKSARKVASPRKVTKKKTTADGAEATAKNASASKATKVSTKKTVKSSEAKPVKAATKSSVTKVATKKSTDKPTAKATRTKKATVTKTAKASAKTTAKKTKDNA.

Aspartate 405 (nucleophile) is an active-site residue. Glutamate 458 functions as the Proton donor in the catalytic mechanism. The tract at residues 758 to 829 (ASKATKVSTK…TTAKKTKDNA (72 aa)) is disordered. 2 stretches are compositionally biased toward low complexity: residues 778–789 (VKAATKSSVTKV) and 810–820 (VTKTAKASAKT).

Belongs to the glycosyl hydrolase 13 family. GlgB subfamily. As to quaternary structure, monomer.

It catalyses the reaction Transfers a segment of a (1-&gt;4)-alpha-D-glucan chain to a primary hydroxy group in a similar glucan chain.. It participates in glycan biosynthesis; glycogen biosynthesis. Functionally, catalyzes the formation of the alpha-1,6-glucosidic linkages in glycogen by scission of a 1,4-alpha-linked oligosaccharide from growing alpha-1,4-glucan chains and the subsequent attachment of the oligosaccharide to the alpha-1,6 position. This chain is 1,4-alpha-glucan branching enzyme GlgB, found in Actinobacillus succinogenes (strain ATCC 55618 / DSM 22257 / CCUG 43843 / 130Z).